A 141-amino-acid polypeptide reads, in one-letter code: Large-conductance mechanosensitive channel (141 aa).

Transmembrane regions (helical) follow at residues 8 to 28, 38 to 58, and 80 to 100; these read FALK…AAFG, IIMP…FFPL, and GNFL…FLIV.

Belongs to the MscL family. Homopentamer.

It is found in the cell inner membrane. Its function is as follows. Channel that opens in response to stretch forces in the membrane lipid bilayer. May participate in the regulation of osmotic pressure changes within the cell. The protein is Large-conductance mechanosensitive channel of Beijerinckia indica subsp. indica (strain ATCC 9039 / DSM 1715 / NCIMB 8712).